The following is a 137-amino-acid chain: Large ribosomal subunit protein uL16 (137 aa).

It belongs to the universal ribosomal protein uL16 family. Part of the 50S ribosomal subunit.

Its function is as follows. Binds 23S rRNA and is also seen to make contacts with the A and possibly P site tRNAs. The protein is Large ribosomal subunit protein uL16 of Mesoplasma florum (strain ATCC 33453 / NBRC 100688 / NCTC 11704 / L1) (Acholeplasma florum).